We begin with the raw amino-acid sequence, 493 residues long: Glutathione hydrolase 6 (493 aa).

Residues 1 to 54 (MERAEEPVVYQKLLPWEPSLESEEEVEEEETSEALVLNPRRHQDSSRNKAGGLP) are Cytoplasmic-facing. The disordered stretch occupies residues 19-52 (SLESEEEVEEEETSEALVLNPRRHQDSSRNKAGG). The segment covering 20-32 (LESEEEVEEEETS) has biased composition (acidic residues). A helical; Signal-anchor for type II membrane protein transmembrane segment spans residues 55–75 (GTWARVVAALLLLAVGCSLAV). The Extracellular segment spans residues 76–493 (RQLQNQGRST…PHACCPFQGF (418 aa)). Positions 83–105 (RSTGSLGSVAPPPGGHSHGPGVY) are disordered. Asparagine 161 and asparagine 370 each carry an N-linked (GlcNAc...) asparagine glycan. Residues 442–455 (PPTQAQHQHQGQQE) are compositionally biased toward low complexity. Residues 442 to 464 (PPTQAQHQHQGQQEPTEHPSTCG) form a disordered region.

It belongs to the gamma-glutamyltransferase family. Heterodimer composed of the light and heavy chains. The active site is located in the light chain. In terms of processing, cleaved by autocatalysis into a large and a small subunit and the autocatalytic cleavage is essential to the functional activation of the enzyme.

The protein resides in the membrane. The enzyme catalyses an N-terminal (5-L-glutamyl)-[peptide] + an alpha-amino acid = 5-L-glutamyl amino acid + an N-terminal L-alpha-aminoacyl-[peptide]. It catalyses the reaction glutathione + H2O = L-cysteinylglycine + L-glutamate. The catalysed reaction is an S-substituted glutathione + H2O = an S-substituted L-cysteinylglycine + L-glutamate. The protein operates within sulfur metabolism; glutathione metabolism. Hydrolyzes and transfers gamma-glutamyl moieties from glutathione and other gamma-glutamyl compounds to acceptors. This chain is Glutathione hydrolase 6, found in Homo sapiens (Human).